Here is a 144-residue protein sequence, read N- to C-terminus: MACAAARSPAEQDRFICIYPAYLNNKKTIAEGRRIPISKAVENPTATEIQDVCSAVGLNVFLEKNKMYSREWNRDVQYRGRVRVQLKQEDGSLCLVQFPSRKSVMLYAAEMIPKLKTRTQKTGGGDQSLQQGEGSKKGKGKKKK.

The segment at 117 to 144 is disordered; the sequence is TRTQKTGGGDQSLQQGEGSKKGKGKKKK.

This sequence belongs to the SRP19 family. As to quaternary structure, component of a signal recognition particle complex that consists of a 7SL RNA molecule of 300 nucleotides and six protein subunits: SRP72, SRP68, SRP54, SRP19, SRP14 and SRP9. Interacts with IPO5, IPO7, IPO8, KPNB1 and TNPO1. Interactions with IPO8 and TNPO1 may be involved in SRP19 import into the nucleus.

It localises to the cytoplasm. The protein resides in the nucleus. It is found in the nucleolus. Its subcellular location is the nucleoplasm. Its function is as follows. Component of the signal recognition particle (SRP) complex, a ribonucleoprotein complex that mediates the cotranslational targeting of secretory and membrane proteins to the endoplasmic reticulum (ER). Binds directly to 7SL RNA. Mediates binding of SRP54 to the SRP complex. In Canis lupus familiaris (Dog), this protein is Signal recognition particle 19 kDa protein.